The chain runs to 354 residues: Glycerol-1-phosphate dehydrogenase [NAD(P)+] (354 aa).

NAD(+)-binding positions include 103-107 (GRAVD) and 125-128 (TAAS). Aspartate 130 provides a ligand contact to substrate. An NAD(+)-binding site is contributed by serine 134. Aspartate 176 provides a ligand contact to substrate. Positions 176 and 255 each coordinate Zn(2+). Histidine 259 contacts substrate. Residue histidine 271 participates in Zn(2+) binding.

The protein belongs to the glycerol-1-phosphate dehydrogenase family. As to quaternary structure, homodimer. Zn(2+) is required as a cofactor.

It is found in the cytoplasm. The enzyme catalyses sn-glycerol 1-phosphate + NAD(+) = dihydroxyacetone phosphate + NADH + H(+). It catalyses the reaction sn-glycerol 1-phosphate + NADP(+) = dihydroxyacetone phosphate + NADPH + H(+). Its pathway is membrane lipid metabolism; glycerophospholipid metabolism. Catalyzes the NAD(P)H-dependent reduction of dihydroxyacetonephosphate (DHAP or glycerone phosphate) to glycerol 1-phosphate (G1P). The G1P thus generated is used as the glycerophosphate backbone of phospholipids in the cellular membranes of Archaea. This Cenarchaeum symbiosum (strain A) protein is Glycerol-1-phosphate dehydrogenase [NAD(P)+].